A 357-amino-acid polypeptide reads, in one-letter code: MSELKNDRYLRALLRQPVDVTPVWMMRQAGRYLPEYKETRAQAGDFISLCKNTELACEVTLQPLRRFPLDAAILFSDILTIPDAMGLGLYFETGEGPRFKTPINSLDDIKKLPIPDPEDELGYVMNAVRAIRHALQGNVPLIGFSGSPWTLATYMIEGGSSKAFTKIKKMMYSEPQALHLLLDKLADSVILYLNAQIKAGAQSIMIFDTWGGVLTGRDYQLFSLQYMHKIVDGLIRENEGRKVPVTLFTKGGGRWLEAMAATGCDALGLDWTIDIEDARRRVGDKVALQGNMDPSMLYAPPARIEQEVATILAGFGKGTGHVFNLGHGIHQDVPPAHAGAFIDAVHRLSKPYHQDND.

Residues 27–31 (RQAGR), Asp77, Tyr154, Thr209, and His327 each bind substrate.

Belongs to the uroporphyrinogen decarboxylase family. As to quaternary structure, homodimer.

The protein resides in the cytoplasm. It carries out the reaction uroporphyrinogen III + 4 H(+) = coproporphyrinogen III + 4 CO2. It functions in the pathway porphyrin-containing compound metabolism; protoporphyrin-IX biosynthesis; coproporphyrinogen-III from 5-aminolevulinate: step 4/4. Its function is as follows. Catalyzes the decarboxylation of four acetate groups of uroporphyrinogen-III to yield coproporphyrinogen-III. The polypeptide is Uroporphyrinogen decarboxylase (Proteus mirabilis (strain HI4320)).